A 347-amino-acid polypeptide reads, in one-letter code: Very-long-chain 3-oxoacyl-CoA reductase (347 aa).

The chain crosses the membrane as a helical span at residues 20–40; that stretch reads LLWVVFGLGVLKCTTLSLRFL. Positions 120, 147, 223, 227, 256, and 258 each coordinate NADP(+). Residue tyrosine 223 is the Proton donor of the active site. Lysine 227 functions as the Lowers pKa of active site Tyr in the catalytic mechanism.

Belongs to the short-chain dehydrogenases/reductases (SDR) family. In terms of assembly, interacts with the fatty acid elongation system components ELO3 and TSC13.

It localises to the endoplasmic reticulum membrane. It carries out the reaction a very-long-chain (3R)-3-hydroxyacyl-CoA + NADP(+) = a very-long-chain 3-oxoacyl-CoA + NADPH + H(+). It catalyses the reaction 3-oxooctadecanoyl-CoA + NADPH + H(+) = (3R)-hydroxyoctadecanoyl-CoA + NADP(+). The enzyme catalyses 3-oxoeicosanoyl-CoA + NADPH + H(+) = (3R)-hydroxyeicosanoyl-CoA + NADP(+). The catalysed reaction is 3-oxodocosanoyl-CoA + NADPH + H(+) = (3R)-hydroxydocosanoyl-CoA + NADP(+). It carries out the reaction 3-oxotetracosanoyl-CoA + NADPH + H(+) = (3R)-hydroxytetracosanoyl-CoA + NADP(+). It catalyses the reaction 3-oxohexacosanoyl-CoA + NADPH + H(+) = (3R)-hydroxyhexacosanoyl-CoA + NADP(+). It functions in the pathway lipid metabolism; fatty acid biosynthesis. Its function is as follows. Component of the microsomal membrane bound fatty acid elongation system, which produces the 26-carbon very long-chain fatty acids (VLCFA) from palmitate. Catalyzes the reduction of the 3-ketoacyl-CoA intermediate that is formed in each cycle of fatty acid elongation. VLCFAs serve as precursors for ceramide and sphingolipids. This Saccharomyces cerevisiae (strain ATCC 204508 / S288c) (Baker's yeast) protein is Very-long-chain 3-oxoacyl-CoA reductase (IFA38).